The sequence spans 530 residues: UDP-glucuronosyltransferase 2B31 (530 aa).

A signal peptide spans 1–24 (MSMKWISVLLGLQLSCYFSSGSCG). At Lys136 the chain carries N6-succinyllysine. Residue Asn316 is glycosylated (N-linked (GlcNAc...) asparagine). Residues 495 to 515 (IGFLLACVATAIFVTTQCCLF) traverse the membrane as a helical segment.

This sequence belongs to the UDP-glycosyltransferase family.

It is found in the microsome membrane. The protein resides in the endoplasmic reticulum membrane. It catalyses the reaction glucuronate acceptor + UDP-alpha-D-glucuronate = acceptor beta-D-glucuronoside + UDP + H(+). UDPGTs are of major importance in the conjugation and subsequent elimination of potentially toxic xenobiotics and endogenous compounds. This isozyme has glucuronidating capacity on phenols, opioids, and carboxylic acid-containing drugs. In Canis lupus familiaris (Dog), this protein is UDP-glucuronosyltransferase 2B31 (UGT2B31).